A 221-amino-acid chain; its full sequence is Serotriflin (221 aa).

Positions 19–147 (LDKHNALRRS…SYNYYYVCHY (129 aa)) constitute an SCP domain. N-linked (GlcNAc...) asparagine glycosylation occurs at N48. 8 disulfide bridges follow: C56-C134, C73-C148, C129-C145, C167-C174, C170-C179, C183-C216, C192-C210, and C201-C214. One can recognise a ShKT domain in the interval 183–216 (CKHVDRYSNCNSLVQQISCQSNNMNTDCPASCFC).

In terms of assembly, forms a stable, non-covalent complex with SSP-2.

Its subcellular location is the secreted. The sequence is that of Serotriflin from Protobothrops flavoviridis (Habu).